The following is a 420-amino-acid chain: MLKMHPNINKYEGVPVTDRIVLAYSGGLDTSVAIGWIGEATGAEVIAVAVDVGQGGESLETVRQRALGCGAVEAYVADARDEFANEYCMPTLKANALYQGHYPLVSAISRPVIVKHLVKAAREFGATTVAHGCTGKGNDQVRFEVGIQTLGPDLKCIAPVRDLALTRDKAIEYAERNNLPIETTKKNPYSIDQNVWGRAVETGYLEDIWNAPTKDIYDYTATPEFPPAPDEAVISFRAGVPVALDGVLLSPLQVIQELNRRAGAQGVGRIDVVEDRLVGIKSREIYEAPGAMTLITAHKHLEDVTIEREQARFKATVSQRWAELVYDGQWFSPLKRSLDVFIDDTQKYVSGDIRVVLHAGVASVNGRRTDTGLYDFNLATYDTGDTFDQSQARGFIELWGLSAKTATTRDERVAASGENA.

An ATP-binding site is contributed by 23 to 31 (AYSGGLDTS). Tyr102 lines the L-citrulline pocket. Gly132 contacts ATP. Residues Thr134, Asn138, and Asp139 each contribute to the L-aspartate site. Residue Asn138 participates in L-citrulline binding. Arg142, Ser190, Glu274, and Tyr286 together coordinate L-citrulline.

The protein belongs to the argininosuccinate synthase family. Type 1 subfamily. Homotetramer.

It is found in the cytoplasm. The enzyme catalyses L-citrulline + L-aspartate + ATP = 2-(N(omega)-L-arginino)succinate + AMP + diphosphate + H(+). It functions in the pathway amino-acid biosynthesis; L-arginine biosynthesis; L-arginine from L-ornithine and carbamoyl phosphate: step 2/3. This chain is Argininosuccinate synthase, found in Renibacterium salmoninarum (strain ATCC 33209 / DSM 20767 / JCM 11484 / NBRC 15589 / NCIMB 2235).